A 255-amino-acid chain; its full sequence is Imidazole glycerol phosphate synthase subunit HisF (255 aa).

Active-site residues include aspartate 11 and aspartate 130.

This sequence belongs to the HisA/HisF family. Heterodimer of HisH and HisF.

The protein localises to the cytoplasm. The catalysed reaction is 5-[(5-phospho-1-deoxy-D-ribulos-1-ylimino)methylamino]-1-(5-phospho-beta-D-ribosyl)imidazole-4-carboxamide + L-glutamine = D-erythro-1-(imidazol-4-yl)glycerol 3-phosphate + 5-amino-1-(5-phospho-beta-D-ribosyl)imidazole-4-carboxamide + L-glutamate + H(+). Its pathway is amino-acid biosynthesis; L-histidine biosynthesis; L-histidine from 5-phospho-alpha-D-ribose 1-diphosphate: step 5/9. In terms of biological role, IGPS catalyzes the conversion of PRFAR and glutamine to IGP, AICAR and glutamate. The HisF subunit catalyzes the cyclization activity that produces IGP and AICAR from PRFAR using the ammonia provided by the HisH subunit. This is Imidazole glycerol phosphate synthase subunit HisF from Rhodopseudomonas palustris (strain ATCC BAA-98 / CGA009).